A 174-amino-acid polypeptide reads, in one-letter code: D(1B) dopamine receptor (174 aa).

The chain crosses the membrane as a helical span at residues 1–10 (SILNLCIISV). At 11–32 (DRYWAISRPFCYERKMTQRVAL) the chain is on the cytoplasmic side. Residues 33-54 (VMVGLAWTLSILISFIPVQLHW) traverse the membrane as a helical segment. Topologically, residues 55–96 (HRDKVGSRDGLDPPSNLANGTPWEEAGESDRSAENCDSSLNR) are extracellular. A disordered region spans residues 64–88 (GLDPPSNLANGTPWEEAGESDRSAE). Asn95 is a glycosylation site (N-linked (GlcNAc...) asparagine). A helical membrane pass occupies residues 97-119 (TYAISSSLISFYIPVAIMIVTYT). The Cytoplasmic segment spans residues 120–169 (RIYRIAQVQIRRISSLERAAEHAQSCRSREACAPDSGLRASIKKETKVLK). Residues 170 to 174 (TLSVI) traverse the membrane as a helical segment.

Belongs to the G-protein coupled receptor 1 family.

Its subcellular location is the cell membrane. Dopamine receptor whose activity is mediated by G proteins which activate adenylyl cyclase. This is D(1B) dopamine receptor (DRD5) from Bos taurus (Bovine).